A 448-amino-acid chain; its full sequence is Metacaspase-1 (448 aa).

Residues 1 to 129 (MFPGQGRHTY…GHYSRPPTDS (129 aa)) form a disordered region. Low complexity predominate over residues 10-44 (YGGQQSNYSNQQQGYDQGYNQGYGQAYGQEYNQGY). A compositionally biased stretch (pro residues) spans 61–70 (SGPPPGPPPG). Residues 99–114 (YGNNQTRGSGNEQNYG) are compositionally biased toward polar residues. Catalysis depends on residues His-231 and Cys-292.

Belongs to the peptidase C14B family.

Its function is as follows. Involved in cell death (apoptosis). The polypeptide is Metacaspase-1 (MCA1) (Candida albicans (strain SC5314 / ATCC MYA-2876) (Yeast)).